We begin with the raw amino-acid sequence, 283 residues long: Quinate/shikimate dehydrogenase (NAD(+)) (283 aa).

Shikimate contacts are provided by Ser17, Thr69, Lys73, Asn94, and Asp110. L-quinate-binding positions include 17–19 (SRT), Thr69, Lys73, Asn94, and Asp110. Residue Lys73 is the Proton acceptor of the active site. NAD(+)-binding positions include 137–138 (GV), Asp158, Arg163, 203–206 (PMGM), Ala213, Val228, and Gly251. A shikimate-binding site is contributed by Gln258. Gln258 provides a ligand contact to L-quinate.

The protein belongs to the shikimate dehydrogenase family. Homodimer.

It carries out the reaction L-quinate + NAD(+) = 3-dehydroquinate + NADH + H(+). It catalyses the reaction shikimate + NAD(+) = 3-dehydroshikimate + NADH + H(+). It participates in metabolic intermediate biosynthesis; chorismate biosynthesis; chorismate from D-erythrose 4-phosphate and phosphoenolpyruvate: step 4/7. The protein operates within aromatic compound metabolism; 3,4-dihydroxybenzoate biosynthesis; 3-dehydroquinate from D-quinate (NAD(+) route). In terms of biological role, involved in the biosynthesis of the chorismate, which leads to the biosynthesis of aromatic amino acids, and plays a key role in the quinate degradation pathway. Catalyzes the NAD(+)-dependent oxidation of both quinate and shikimate to 3-dehydroquinate and 3-dehydroshikimate, respectively. In Corynebacterium glutamicum (strain R), this protein is Quinate/shikimate dehydrogenase (NAD(+)).